A 409-amino-acid chain; its full sequence is Lissencephaly-1 homolog (409 aa).

The region spanning 7–39 is the LisH domain; it reads QREELNQAIADYLGTNGYADSLEAFRKEADLST. A coiled-coil region spans residues 54 to 81; sequence TSVIRLQKKVMELEAKLTEAEKEVIEGA. WD repeat units follow at residues 104 to 145, 146 to 185, 189 to 228, 231 to 270, 273 to 332, 335 to 374, and 377 to 409; these read GHRA…RSLK, GHTD…ACVK, GHDH…CVKT, GHRE…CKVE, DHEH…CLLT, GHDN…CMKT, and AHQH…WECR.

Belongs to the WD repeat LIS1/nudF family.

The protein resides in the cytoplasm. Its subcellular location is the cytoskeleton. The protein localises to the microtubule organizing center. It is found in the centrosome. Its function is as follows. Positively regulates the activity of the minus-end directed microtubule motor protein dynein. May enhance dynein-mediated microtubule sliding by targeting dynein to the microtubule plus end. Required for several dynein- and microtubule-dependent processes. The chain is Lissencephaly-1 homolog from Drosophila willistoni (Fruit fly).